A 141-amino-acid chain; its full sequence is Nucleoside diphosphate kinase (141 aa).

Residues Lys-11, Phe-59, Arg-87, Thr-93, Arg-104, and Asn-114 each contribute to the ATP site. The active-site Pros-phosphohistidine intermediate is His-117.

The protein belongs to the NDK family. As to quaternary structure, homotetramer. Requires Mg(2+) as cofactor.

The protein resides in the cytoplasm. The catalysed reaction is a 2'-deoxyribonucleoside 5'-diphosphate + ATP = a 2'-deoxyribonucleoside 5'-triphosphate + ADP. It carries out the reaction a ribonucleoside 5'-diphosphate + ATP = a ribonucleoside 5'-triphosphate + ADP. Its function is as follows. Major role in the synthesis of nucleoside triphosphates other than ATP. The ATP gamma phosphate is transferred to the NDP beta phosphate via a ping-pong mechanism, using a phosphorylated active-site intermediate. The polypeptide is Nucleoside diphosphate kinase (Burkholderia cenocepacia (strain HI2424)).